The following is a 142-amino-acid chain: Small ribosomal subunit protein uS12 (142 aa).

It belongs to the universal ribosomal protein uS12 family. In terms of assembly, part of the 30S ribosomal subunit.

In terms of biological role, with S4 and S5 plays an important role in translational accuracy. Located at the interface of the 30S and 50S subunits. In Methanosarcina barkeri (strain Fusaro / DSM 804), this protein is Small ribosomal subunit protein uS12.